Consider the following 1168-residue polypeptide: DNA-directed RNA polymerase subunit beta (1168 aa).

The protein belongs to the RNA polymerase beta chain family. In terms of assembly, the RNAP catalytic core consists of 2 alpha, 1 beta, 1 beta' and 1 omega subunit. When a sigma factor is associated with the core the holoenzyme is formed, which can initiate transcription.

The catalysed reaction is RNA(n) + a ribonucleoside 5'-triphosphate = RNA(n+1) + diphosphate. In terms of biological role, DNA-dependent RNA polymerase catalyzes the transcription of DNA into RNA using the four ribonucleoside triphosphates as substrates. This is DNA-directed RNA polymerase subunit beta from Corynebacterium kroppenstedtii (strain DSM 44385 / JCM 11950 / CIP 105744 / CCUG 35717).